The chain runs to 572 residues: Ribonuclease Y (572 aa).

A helical membrane pass occupies residues 1 to 21 (MPTLYVILSLLLGLIGGVLVQ). Disordered stretches follow at residues 59 to 85 (HEAAEQDRQDAISKTQDAARRVQDAAE) and 110 to 142 (QLEAEREQAKADAAQQREALSTDRQETRRERED). 2 stretches are compositionally biased toward basic and acidic residues: residues 110 to 119 (QLEAEREQAK) and 129 to 142 (LSTDRQETRRERED). The region spanning 262–322 (SVSVVPIPSD…LRREVARHVL (61 aa)) is the KH domain. Positions 388-481 (VLKHSVQVAH…VAAADAISAA (94 aa)) constitute an HD domain.

This sequence belongs to the RNase Y family.

The protein resides in the cell membrane. In terms of biological role, endoribonuclease that initiates mRNA decay. This is Ribonuclease Y from Deinococcus radiodurans (strain ATCC 13939 / DSM 20539 / JCM 16871 / CCUG 27074 / LMG 4051 / NBRC 15346 / NCIMB 9279 / VKM B-1422 / R1).